The chain runs to 83 residues: Small ribosomal subunit protein bS18 (83 aa).

It belongs to the bacterial ribosomal protein bS18 family. In terms of assembly, part of the 30S ribosomal subunit. Forms a tight heterodimer with protein bS6.

In terms of biological role, binds as a heterodimer with protein bS6 to the central domain of the 16S rRNA, where it helps stabilize the platform of the 30S subunit. This Desulfosudis oleivorans (strain DSM 6200 / JCM 39069 / Hxd3) (Desulfococcus oleovorans) protein is Small ribosomal subunit protein bS18.